The primary structure comprises 625 residues: Phosphomethylpyrimidine synthase (625 aa).

Residues N237, M266, Y295, H331, 351-353 (SRG), 392-395 (DGLR), and E431 each bind substrate. H435 contacts Zn(2+). Y458 contributes to the substrate binding site. A Zn(2+)-binding site is contributed by H499. [4Fe-4S] cluster contacts are provided by C579, C582, and C587.

This sequence belongs to the ThiC family. Homodimer. [4Fe-4S] cluster is required as a cofactor.

The catalysed reaction is 5-amino-1-(5-phospho-beta-D-ribosyl)imidazole + S-adenosyl-L-methionine = 4-amino-2-methyl-5-(phosphooxymethyl)pyrimidine + CO + 5'-deoxyadenosine + formate + L-methionine + 3 H(+). It participates in cofactor biosynthesis; thiamine diphosphate biosynthesis. Its function is as follows. Catalyzes the synthesis of the hydroxymethylpyrimidine phosphate (HMP-P) moiety of thiamine from aminoimidazole ribotide (AIR) in a radical S-adenosyl-L-methionine (SAM)-dependent reaction. The chain is Phosphomethylpyrimidine synthase from Cupriavidus metallidurans (strain ATCC 43123 / DSM 2839 / NBRC 102507 / CH34) (Ralstonia metallidurans).